Here is a 508-residue protein sequence, read N- to C-terminus: MGLPWYRVHTVVLNDPGRLLSVHIMHTALVSGWAGSMALYELAVFDPSDPILDPMWRQGMFVIPFMTRLGITNSWGGWSITGGTVTNPGIWSYEGVAGAHIVFSGLCFLASIWHWVYWDLEIFCDERTGKPSLDLPKIFGIHLFLSGVACFGFGAFHVTGLYGPGIWVSDPYGLTGKVQSVNPAWGAEGFDPFVPGGIASHHIAAGTLGILAGLFHLSVRPPQRLYKGLRMGNIETVLSSSIAAVFFAAFIVAGTMWYGSATTPIELFGPTRYQWDQGYFQQEIYRRVGTGLAENLSLSEAWSKIPDKLAFYDYIGNNPAKGGLFRAGSMDNGDGIAVGWLGHPIFRDKEGHELFVRRMPTFFETFPVVLVDGDGIVRADVPFRRAESKYSVEQVGVTVEFYGGELNRVSYSDPATVKKYARRAQLGEIFELDRATLKSDGVFRSSPRGWFTFGHASFALLFFFGHIWHGARTLFRDVFAGIDPDLDAQVEFGAFQKIGDPTTRRQIV.

6 helical membrane passes run 21 to 36 (SVHI…WAGS), 101 to 115 (IVFS…IWHW), 140 to 156 (GIHL…FGAF), 203 to 218 (IAAG…FHLS), 237 to 252 (VLSS…AFIV), and 457 to 472 (SFAL…HGAR).

This sequence belongs to the PsbB/PsbC family. PsbB subfamily. PSII is composed of 1 copy each of membrane proteins PsbA, PsbB, PsbC, PsbD, PsbE, PsbF, PsbH, PsbI, PsbJ, PsbK, PsbL, PsbM, PsbT, PsbX, PsbY, PsbZ, Psb30/Ycf12, at least 3 peripheral proteins of the oxygen-evolving complex and a large number of cofactors. It forms dimeric complexes. Binds multiple chlorophylls. PSII binds additional chlorophylls, carotenoids and specific lipids. is required as a cofactor.

Its subcellular location is the plastid. It is found in the chloroplast thylakoid membrane. Functionally, one of the components of the core complex of photosystem II (PSII). It binds chlorophyll and helps catalyze the primary light-induced photochemical processes of PSII. PSII is a light-driven water:plastoquinone oxidoreductase, using light energy to abstract electrons from H(2)O, generating O(2) and a proton gradient subsequently used for ATP formation. This chain is Photosystem II CP47 reaction center protein, found in Amborella trichopoda.